Reading from the N-terminus, the 181-residue chain is uncharacterized protein (181 aa).

This is an uncharacterized protein from Acheta domesticus (House cricket).